The following is a 416-amino-acid chain: Histidine--tRNA ligase (416 aa).

The protein belongs to the class-II aminoacyl-tRNA synthetase family.

It localises to the cytoplasm. It catalyses the reaction tRNA(His) + L-histidine + ATP = L-histidyl-tRNA(His) + AMP + diphosphate + H(+). The sequence is that of Histidine--tRNA ligase (hisS) from Methanocaldococcus jannaschii (strain ATCC 43067 / DSM 2661 / JAL-1 / JCM 10045 / NBRC 100440) (Methanococcus jannaschii).